The chain runs to 616 residues: Zinc metalloproteinase nas-36 (616 aa).

An N-terminal signal peptide occupies residues 1–21; that stretch reads MRRFCRLLFLNSLLSISICKA. Residues 22-125 constitute a propeptide that is removed on maturation; it reads QNPAHLVADE…SKDKTKRLRR (104 aa). Residues 126–321 form the Peptidase M12A domain; the sequence is SFVSDKTATW…VATINTAYCK (196 aa). Disulfide bonds link Cys-168-Cys-320, Cys-191-Cys-210, Cys-324-Cys-345, Cys-347-Cys-356, Cys-367-Cys-396, Cys-424-Cys-444, Cys-518-Cys-549, Cys-522-Cys-554, and Cys-534-Cys-539. An N-linked (GlcNAc...) asparagine glycan is attached at Asn-173. His-218 provides a ligand contact to Zn(2+). The active site involves Glu-219. 2 residues coordinate Zn(2+): His-222 and His-228. One can recognise an EGF-like domain in the interval 316 to 357; it reads NTAYCKEECKSEKTECEYGGYMRPSKCSECLCPDGLGGEKCE. One can recognise a CUB domain in the interval 367-481; it reads CGGILELSDE…IGFKIQVRST (115 aa). The TSP type-1 domain occupies 506 to 555; the sequence is PNVWADWGEWSMCSRTCGGCGIRSRVRSCRSKKCEGRRQEFGTCNLKACP.

Zn(2+) serves as cofactor.

Its subcellular location is the secreted. In terms of biological role, mtalloprotease. Involved in molting, a process during larval stages in which a new cuticle is formed and the old cuticle is shed. This chain is Zinc metalloproteinase nas-36, found in Caenorhabditis briggsae.